We begin with the raw amino-acid sequence, 270 residues long: Phosphonates import ATP-binding protein PhnC 1 (270 aa).

Residues 2-245 (LVVEGLTCRF…IARELYDLEA (244 aa)) form the ABC transporter domain. 34 to 41 (GRSGAGKS) is an ATP binding site.

It belongs to the ABC transporter superfamily. Phosphonates importer (TC 3.A.1.9.1) family. As to quaternary structure, the complex is composed of two ATP-binding proteins (PhnC), two transmembrane proteins (PhnE) and a solute-binding protein (PhnD).

The protein localises to the cell inner membrane. It catalyses the reaction phosphonate(out) + ATP + H2O = phosphonate(in) + ADP + phosphate + H(+). Its function is as follows. Part of the ABC transporter complex PhnCDE involved in phosphonates import. Responsible for energy coupling to the transport system. The protein is Phosphonates import ATP-binding protein PhnC 1 of Rhodopseudomonas palustris (strain ATCC BAA-98 / CGA009).